The primary structure comprises 197 residues: Isopentenyl-diphosphate Delta-isomerase (197 aa).

Residues His-41 and His-48 each coordinate Mn(2+). Residues 46-183 (QLHRAFSVFL…SWFMTVLDAA (138 aa)) form the Nudix hydrolase domain. The active site involves Cys-83. Position 83 (Cys-83) interacts with Mg(2+). His-85 is a Mn(2+) binding site. Mg(2+) is bound at residue Glu-103. Residues Glu-130 and Glu-132 each coordinate Mn(2+). Glu-132 is a catalytic residue.

The protein belongs to the IPP isomerase type 1 family. Mg(2+) serves as cofactor. Mn(2+) is required as a cofactor.

Its subcellular location is the cytoplasm. It carries out the reaction isopentenyl diphosphate = dimethylallyl diphosphate. The protein operates within isoprenoid biosynthesis; dimethylallyl diphosphate biosynthesis; dimethylallyl diphosphate from isopentenyl diphosphate: step 1/1. Functionally, catalyzes the 1,3-allylic rearrangement of the homoallylic substrate isopentenyl (IPP) to its highly electrophilic allylic isomer, dimethylallyl diphosphate (DMAPP). The sequence is that of Isopentenyl-diphosphate Delta-isomerase from Streptomyces avermitilis (strain ATCC 31267 / DSM 46492 / JCM 5070 / NBRC 14893 / NCIMB 12804 / NRRL 8165 / MA-4680).